A 466-amino-acid polypeptide reads, in one-letter code: L-seryl-tRNA(Sec) selenium transferase (466 aa).

The residue at position 292 (K292) is an N6-(pyridoxal phosphate)lysine.

Belongs to the SelA family. Requires pyridoxal 5'-phosphate as cofactor.

It is found in the cytoplasm. The enzyme catalyses L-seryl-tRNA(Sec) + selenophosphate + H(+) = L-selenocysteinyl-tRNA(Sec) + phosphate. The protein operates within aminoacyl-tRNA biosynthesis; selenocysteinyl-tRNA(Sec) biosynthesis; selenocysteinyl-tRNA(Sec) from L-seryl-tRNA(Sec) (bacterial route): step 1/1. In terms of biological role, converts seryl-tRNA(Sec) to selenocysteinyl-tRNA(Sec) required for selenoprotein biosynthesis. This Rhizobium meliloti (strain 1021) (Ensifer meliloti) protein is L-seryl-tRNA(Sec) selenium transferase.